Reading from the N-terminus, the 436-residue chain is uncharacterized protein (436 aa).

The next 12 membrane-spanning stretches (helical) occupy residues 38–58 (ILIF…TVGA), 70–90 (VAGI…LLIG), 102–122 (LAGG…AALI), 125–145 (VALL…NLQV), 160–180 (TAAS…PNLV), 197–217 (GPFI…LIFL), 254–274 (IMVG…IMTM), 291–311 (LVIG…GLLV), 319–339 (MAIA…IAPA), 342–362 (LSLL…GLLT), 383–403 (FDVL…MVVA), and 409–429 (ILSI…IWYF).

This sequence belongs to the major facilitator superfamily.

It is found in the cell membrane. This is an uncharacterized protein from Bacillus subtilis (strain 168).